The chain runs to 299 residues: Acetylglutamate kinase (299 aa).

Substrate-binding positions include 70–71, R92, and N186; that span reads GG.

Belongs to the acetylglutamate kinase family. ArgB subfamily.

It localises to the cytoplasm. It carries out the reaction N-acetyl-L-glutamate + ATP = N-acetyl-L-glutamyl 5-phosphate + ADP. The protein operates within amino-acid biosynthesis; L-arginine biosynthesis; N(2)-acetyl-L-ornithine from L-glutamate: step 2/4. Functionally, catalyzes the ATP-dependent phosphorylation of N-acetyl-L-glutamate. In Caldanaerobacter subterraneus subsp. tengcongensis (strain DSM 15242 / JCM 11007 / NBRC 100824 / MB4) (Thermoanaerobacter tengcongensis), this protein is Acetylglutamate kinase.